The primary structure comprises 436 residues: Adenosylmethionine-8-amino-7-oxononanoate aminotransferase (436 aa).

W66 contacts substrate. Residue 126–127 (GS) coordinates pyridoxal 5'-phosphate. Y159 is a substrate binding site. D256 contributes to the pyridoxal 5'-phosphate binding site. Substrate-binding residues include K285 and G318. K285 is subject to N6-(pyridoxal phosphate)lysine. Residue 319–320 (PT) participates in pyridoxal 5'-phosphate binding. Substrate is bound at residue R402.

This sequence belongs to the class-III pyridoxal-phosphate-dependent aminotransferase family. BioA subfamily. Homodimer. Pyridoxal 5'-phosphate serves as cofactor.

The protein localises to the cytoplasm. It carries out the reaction (8S)-8-amino-7-oxononanoate + S-adenosyl-L-methionine = S-adenosyl-4-methylsulfanyl-2-oxobutanoate + (7R,8S)-7,8-diammoniononanoate. The protein operates within cofactor biosynthesis; biotin biosynthesis; 7,8-diaminononanoate from 8-amino-7-oxononanoate (SAM route): step 1/1. Its function is as follows. Catalyzes the transfer of the alpha-amino group from S-adenosyl-L-methionine (SAM) to 7-keto-8-aminopelargonic acid (KAPA) to form 7,8-diaminopelargonic acid (DAPA). It is the only aminotransferase known to utilize SAM as an amino donor. In Mycobacterium leprae (strain TN), this protein is Adenosylmethionine-8-amino-7-oxononanoate aminotransferase.